The following is a 180-amino-acid chain: Large ribosomal subunit protein uL5 (180 aa).

It belongs to the universal ribosomal protein uL5 family. In terms of assembly, part of the 50S ribosomal subunit; part of the 5S rRNA/L5/L18/L25 subcomplex. Contacts the 5S rRNA and the P site tRNA. Forms a bridge to the 30S subunit in the 70S ribosome.

This is one of the proteins that bind and probably mediate the attachment of the 5S RNA into the large ribosomal subunit, where it forms part of the central protuberance. In the 70S ribosome it contacts protein S13 of the 30S subunit (bridge B1b), connecting the 2 subunits; this bridge is implicated in subunit movement. Contacts the P site tRNA; the 5S rRNA and some of its associated proteins might help stabilize positioning of ribosome-bound tRNAs. The polypeptide is Large ribosomal subunit protein uL5 (Streptococcus sanguinis (strain SK36)).